The sequence spans 80 residues: Small ribosomal subunit protein bS18 (80 aa).

This sequence belongs to the bacterial ribosomal protein bS18 family. Part of the 30S ribosomal subunit. Forms a tight heterodimer with protein bS6.

In terms of biological role, binds as a heterodimer with protein bS6 to the central domain of the 16S rRNA, where it helps stabilize the platform of the 30S subunit. The polypeptide is Small ribosomal subunit protein bS18 (Beijerinckia indica subsp. indica (strain ATCC 9039 / DSM 1715 / NCIMB 8712)).